The following is a 427-amino-acid chain: Protein king tubby 1 (427 aa).

The tract at residues 48-174 (SPSNPDQIIS…ASGHNDAEGD (127 aa)) is disordered. The span at 57–86 (SSSGSPTTVTATGTGTTTTTGSVTTTPTSP) shows a compositional bias: low complexity.

It belongs to the TUB family.

Its subcellular location is the cytoplasm. It is found in the nucleus. This chain is Protein king tubby 1 (king-tubby1), found in Culex quinquefasciatus (Southern house mosquito).